The sequence spans 645 residues: Lipase 1 (645 aa).

The N-terminal stretch at 1 to 24 (MKRSFIFAPGMLALSISAISNAHA) is a signal peptide. S34 functions as the Nucleophile in the catalytic mechanism. Active-site residues include D327 and H330. An Autotransporter domain is found at 383–645 (NEQGKLGVFG…SFSLGVNASF (263 aa)).

The protein belongs to the 'GDSL' lipolytic enzyme family.

Its subcellular location is the secreted. It catalyses the reaction a triacylglycerol + H2O = a diacylglycerol + a fatty acid + H(+). The protein is Lipase 1 (lip-1) of Photorhabdus luminescens (Xenorhabdus luminescens).